The sequence spans 267 residues: tRNA pseudouridine synthase A (267 aa).

Asp51 functions as the Nucleophile in the catalytic mechanism. Tyr109 provides a ligand contact to substrate.

It belongs to the tRNA pseudouridine synthase TruA family.

The catalysed reaction is uridine(38/39/40) in tRNA = pseudouridine(38/39/40) in tRNA. In terms of biological role, formation of pseudouridine at positions 38, 39 and 40 in the anticodon stem and loop of transfer RNAs. This chain is tRNA pseudouridine synthase A, found in Methanothrix thermoacetophila (strain DSM 6194 / JCM 14653 / NBRC 101360 / PT) (Methanosaeta thermophila).